A 466-amino-acid polypeptide reads, in one-letter code: UDP-N-acetylmuramoylalanine--D-glutamate ligase (466 aa).

115-121 (GTDGKTT) contributes to the ATP binding site.

It belongs to the MurCDEF family.

Its subcellular location is the cytoplasm. The enzyme catalyses UDP-N-acetyl-alpha-D-muramoyl-L-alanine + D-glutamate + ATP = UDP-N-acetyl-alpha-D-muramoyl-L-alanyl-D-glutamate + ADP + phosphate + H(+). It participates in cell wall biogenesis; peptidoglycan biosynthesis. Functionally, cell wall formation. Catalyzes the addition of glutamate to the nucleotide precursor UDP-N-acetylmuramoyl-L-alanine (UMA). This chain is UDP-N-acetylmuramoylalanine--D-glutamate ligase, found in Chlorobium phaeobacteroides (strain BS1).